The chain runs to 143 residues: Large ribosomal subunit protein uL13 (143 aa).

This sequence belongs to the universal ribosomal protein uL13 family. Part of the 50S ribosomal subunit.

Its function is as follows. This protein is one of the early assembly proteins of the 50S ribosomal subunit, although it is not seen to bind rRNA by itself. It is important during the early stages of 50S assembly. In Dichelobacter nodosus (strain VCS1703A), this protein is Large ribosomal subunit protein uL13.